The chain runs to 414 residues: Protein FAM81B (414 aa).

Residues 1–13 (MTSETDINKSASP) show a composition bias toward polar residues. The disordered stretch occupies residues 1–43 (MTSETDINKSASPTAAAKEQPEEPDGPLPGSASEQEKKVRFSP). Coiled coils occupy residues 70–94 (NTQR…LEQA), 121–149 (LLEN…QIKA), 188–223 (KLSG…NLDT), and 266–414 (LNLY…LQES).

Belongs to the FAM81 family.

The polypeptide is Protein FAM81B (FAM81B) (Bos taurus (Bovine)).